A 58-amino-acid polypeptide reads, in one-letter code: Small ribosomal subunit protein bS21 (58 aa).

Residues Lys25–Ile58 form a disordered region. Residues Glu31–Ser42 are compositionally biased toward basic and acidic residues. The segment covering Val43 to Ile58 has biased composition (basic residues).

The protein belongs to the bacterial ribosomal protein bS21 family.

This Streptococcus thermophilus (strain ATCC BAA-491 / LMD-9) protein is Small ribosomal subunit protein bS21.